Reading from the N-terminus, the 395-residue chain is Elongation factor Tu (395 aa).

A tr-type G domain is found at 10–204; sequence KPHVNIGTIG…AIDNWIPLPQ (195 aa). The interval 19–26 is G1; sequence GHVDHGKT. 19–26 contributes to the GTP binding site; sequence GHVDHGKT. Thr26 is a Mg(2+) binding site. Residues 60–64 form a G2 region; the sequence is GITIN. Positions 81-84 are G3; it reads DCPG. GTP is bound by residues 81 to 85 and 136 to 139; these read DCPGH and NKVD. Residues 136 to 139 are G4; sequence NKVD. The segment at 174–176 is G5; sequence SAL.

The protein belongs to the TRAFAC class translation factor GTPase superfamily. Classic translation factor GTPase family. EF-Tu/EF-1A subfamily. Monomer.

It localises to the cytoplasm. The catalysed reaction is GTP + H2O = GDP + phosphate + H(+). GTP hydrolase that promotes the GTP-dependent binding of aminoacyl-tRNA to the A-site of ribosomes during protein biosynthesis. This Azobacteroides pseudotrichonymphae genomovar. CFP2 protein is Elongation factor Tu.